We begin with the raw amino-acid sequence, 387 residues long: METLQDIGTNMLKDELRTPYFMIDEAKLIANLEIAKHLKEISGVKMVLALKCFSTWGVFDIIKPYLDGTTSSGPFEVKLGYETFGGETHAYSVGYSEEDVKEVIDICDKMIFNSQSQLAAYRHLVEGKASLGLRINPGVSYAGQDLANPARQFSRLGVQADHIDESVFDSINGVMFHMNCENKDVDAFIGLLDAISERFGRYLDKLDWVSLGGGVFFTWPGYDVEKLGAALKAFAERHAVQLYLEPGEAIITKTTDLVVTVVDIVENGMKTAIVDSATEAHRLDTLIYKEPASVLEASDKGQHEYVIGSCSCLAGDQFCVAKFDEPLQVGQKLHILDSAGYTMVKLNWFNGLKMPSVYCERKNGQIQKINQFGYEDFKRTLSLWSIE.

N6-(pyridoxal phosphate)lysine is present on Lys-51. Positions 248 and 284 each coordinate substrate.

It belongs to the Orn/Lys/Arg decarboxylase class-II family. NspC subfamily. As to quaternary structure, homodimer. Pyridoxal 5'-phosphate serves as cofactor.

It is found in the cytoplasm. It carries out the reaction carboxynorspermidine + H(+) = norspermidine + CO2. The enzyme catalyses carboxyspermidine + H(+) = spermidine + CO2. Catalyzes the decarboxylation of carboxynorspermidine and carboxyspermidine. Essential for biofilm formation. The polypeptide is Carboxynorspermidine/carboxyspermidine decarboxylase (Vibrio cholerae serotype O1 (strain ATCC 39315 / El Tor Inaba N16961)).